The following is a 228-amino-acid chain: Prolactin-2B1 (228 aa).

A signal peptide spans 1–31; sequence MLLYLPQIFSSRASSLLFLVPYLLFWENVAS. Cystine bridges form between Cys89–Cys194 and Cys203–Cys228. A glycan (N-linked (GlcNAc...) asparagine) is linked at Asn173.

The protein belongs to the somatotropin/prolactin family. In terms of tissue distribution, expression restricted to the placenta in trophoblast cells within the labyrinth zone.

Its subcellular location is the secreted. In Rattus norvegicus (Rat), this protein is Prolactin-2B1 (Prl2b1).